Consider the following 520-residue polypeptide: GMP synthase [glutamine-hydrolyzing] (520 aa).

The Glutamine amidotransferase type-1 domain maps to 9–202 (SVLIVDFGSQ…IHNIAGIKGD (194 aa)). The active-site Nucleophile is cysteine 86. Residues histidine 176 and glutamate 178 contribute to the active site. The 193-residue stretch at 203 to 395 (WSMSAYRQKA…LGLPDSFIGR (193 aa)) folds into the GMPS ATP-PPase domain. Position 230 to 236 (230 to 236 (SGGVDSS)) interacts with ATP.

In terms of assembly, homodimer.

It catalyses the reaction XMP + L-glutamine + ATP + H2O = GMP + L-glutamate + AMP + diphosphate + 2 H(+). The protein operates within purine metabolism; GMP biosynthesis; GMP from XMP (L-Gln route): step 1/1. Its function is as follows. Catalyzes the synthesis of GMP from XMP. This is GMP synthase [glutamine-hydrolyzing] from Rhizobium etli (strain CIAT 652).